Consider the following 414-residue polypeptide: MNDNQLAPVARPRSPLELLDTVPDSLLRRLKQYSGRLATEAVSAMQERLPFFADLEASQRASVALVVQTAVVNFVEWMHDPHSDVGYTAQAFELVPQDLTRRIALRQTVDMVRVTMEFFEEVVPLLARSEEQLTALTVGILKYSRDLAFTAATAYADAAEARGTWDSRMEASVVDAVVRGDTGPELLSRAAALNWDTTAPATVLVGTPAPGPNGSNSDGDSERASQDVRDTAARHGRAALTDVHGTWLVAIVSGQLSPTEKFLKDLLAAFADAPVVIGPTAPMLTAAHRSASEAISGMNAVAGWRGAPRPVLARELLPERALMGDASAIVALHTDVMRPLADAGPTLIETLDAYLDCGGAIEACARKLFVHPNTVRYRLKRITDFTGRDPTQPRDAYVLRVAATVGQLNYPTPH.

The tract at residues Leu204–Asp230 is disordered. The segment covering Asp220–Asp230 has biased composition (basic and acidic residues).

This sequence belongs to the CdaR family.

This is an uncharacterized protein from Mycobacterium tuberculosis (strain CDC 1551 / Oshkosh).